Here is a 204-residue protein sequence, read N- to C-terminus: Putative rubrerythrin (204 aa).

The region spanning 1 to 159 (MINNFFVINM…KLLKEVEEGT (159 aa)) is the Ferritin-like diiron domain. Positions 24, 57, 107, 110, 141, 144, 171, 174, 187, and 190 each coordinate Fe(3+). The region spanning 166-204 (PVEWVCRKCGFVHLGKEPPEKCPSCSHPRKYFEVKCEKY) is the Rubredoxin-like domain.

Homodimer. Possesses two rubredoxin-like centers and two non-sulfur oxo-bridged di-iron centers per dimer. Requires Fe(3+) as cofactor.

It localises to the cytoplasm. Functionally, may provide oxidative stress protection via catalytic reduction of intracellular hydrogen peroxide. The protein is Putative rubrerythrin of Methanocaldococcus jannaschii (strain ATCC 43067 / DSM 2661 / JAL-1 / JCM 10045 / NBRC 100440) (Methanococcus jannaschii).